We begin with the raw amino-acid sequence, 284 residues long: MDAIKKKMQAMKIEKDNAMDRADAAEEKARQQQERVEKLEEELRDTQKKMMQVENELDKAQEELTGANAQLEEKEKKVQEAEAEVAALNRRIQLLEEDFERAEERLKIATEKLEEASQTADESERVRKVMENRSLQDEERVYQLEAQLKEAQLLAEEADRKYDEVARKLAMVEADLERAEERAEAGENKIVELEEELRVVGNNLKSLEVSEEKALQREDSYEEQIRLLTQRLKEAETRAEFAERSVQKLQKEVDRLEDELVHEKEKYKAISEELDQTFQELSGY.

The segment at 1–47 is disordered; it reads MDAIKKKMQAMKIEKDNAMDRADAAEEKARQQQERVEKLEEELRDTQ. Residues 1 to 284 adopt a coiled-coil conformation; it reads MDAIKKKMQA…DQTFQELSGY (284 aa). Residues 12–38 are compositionally biased toward basic and acidic residues; that stretch reads KIEKDNAMDRADAAEEKARQQQERVEK.

The protein belongs to the tropomyosin family. Homodimer.

In terms of biological role, tropomyosin, in association with the troponin complex, plays a central role in the calcium dependent regulation of muscle contraction. The sequence is that of Tropomyosin from Trichinella pseudospiralis (Parasitic roundworm).